A 252-amino-acid chain; its full sequence is Isoprenyl transferase (252 aa).

Asp-32 is a catalytic residue. Asp-32 serves as a coordination point for Mg(2+). Substrate contacts are provided by residues 33-36 (GNGR), Trp-37, Arg-45, His-49, and 77-79 (STE). Asn-80 serves as the catalytic Proton acceptor. Residues Trp-81, Arg-83, Arg-200, and 206-208 (RLS) contribute to the substrate site. Glu-219 lines the Mg(2+) pocket.

Belongs to the UPP synthase family. In terms of assembly, homodimer. The cofactor is Mg(2+).

Its function is as follows. Catalyzes the condensation of isopentenyl diphosphate (IPP) with allylic pyrophosphates generating different type of terpenoids. The sequence is that of Isoprenyl transferase from Listeria monocytogenes serotype 4b (strain F2365).